The sequence spans 286 residues: UPF0725 protein At2g20620 (286 aa).

The interval 1-49 (MVLETPVCSPIDKESSSDDVQLNKPPKKKRKLDVVYPPRDNTSSSSDVK) is disordered.

This sequence belongs to the UPF0725 (EMB2204) family.

The chain is UPF0725 protein At2g20620 from Arabidopsis thaliana (Mouse-ear cress).